Here is a 270-residue protein sequence, read N- to C-terminus: MNTSILAPPESLLEAQKVRLAIREGYDRPTAGMANGLTQVNMISVPQDWAYDFLLYTQRNPQSCPVLDVIDAGQFQSRLIQDKQHDIRTDFPRYRIWEYGQCVDEVNDATSIWNNHPDLVTFLIGCSFSFESALLNAGIEVRHITDQRNVPMYLSNIPCASAGRISGNMVVSMRPIPAAQVSQAVQITAKMPRVHGAPVHIGDPKSLGIADLSKPDFGDFPRILDGEIPVFWACGVTPQAAVMRSKVPFAISHAPGYMLITDVPDQAWML.

It belongs to the D-glutamate cyclase family.

This is Putative hydro-lyase ACIAD2519 from Acinetobacter baylyi (strain ATCC 33305 / BD413 / ADP1).